Here is a 700-residue protein sequence, read N- to C-terminus: Stonustoxin subunit beta (700 aa).

The structural MACPF/CDC pore-forming domain stretch occupies residues 2–264 (PSDILVVAAL…EAPQLMADSS (263 aa)). Residues 265–384 (TPILRKVRNT…DILTKAKPKV (120 aa)) are structural FAT domain. The tract at residues 385 to 514 (IFNQGVLFKG…PYMPGVESIK (130 aa)) is thioredoxin (THX) domain. One can recognise a B30.2/SPRY domain in the interval 506–700 (YMPGVESIKD…QKVNGQIKLL (195 aa)).

It belongs to the SNTX/VTX toxin family. Heterodimer of alpha and beta subunits; non-covalently linked. Intrachain disulfide bonds may be present in the heterodimer. Post-translationally, not glycosylated. In terms of tissue distribution, expressed by the venom gland.

It is found in the secreted. Its function is as follows. This lethal (towards mammals) heterodimer induces hemolytic activities due to its ability to form pores in the cell membrane. The pore may be composed of 10 SNTX-alpha/beta heterodimers. The toxin elicits potent hypotension which is endothelium-dependent and appears to be mediated by the nitric oxide pathway and activation of potassium channels. In addition, it displays edema-inducing activities, increases vascular permeability. It also shows myotoxic activities and interferes irreversibly with neuromuscular function. It also induces irreversible platelet aggregation in rabbit or rat but not in human or mouse whole blood. In addition, it has been observed to increase spontaneous quantal acetylcholine release from isolated frog cutaneous pectoris motor endings. This is Stonustoxin subunit beta from Synanceia horrida (Estuarine stonefish).